Consider the following 520-residue polypeptide: MNTTISNQTPHIRIFDTTLRDGEQSPGCSMTPQQKLVMARALDELGVDIIETGFPASSHSDREAVAMMGRELRRPTLAVLSRCLQADIETSAKALETAANPRLHVFLSTSPLHREHKLRMSREQVLESVHRHVTLARGYIDDVEFSAEDATRTEEDFLAEVTRVAVAAGATTINLPDTVGFTTPEEIRGMFSRLIASVEGADKVIFSAHCHNDLGLAVANSLAAIEGGARQVECTINGIGERAGNCALEEITMALKVRGAFYNIDSAINTPRIVSTSQLLQRLVGMPVQRNKAVVGGNAFAHESGIHQHGMLRHRGTYEIMRPEDVGWESSQMVLGRHSGRAAVERRLRALGYLLEEEEVKLMFEQFKALCEKQRLVTDADLQALMQDATVQEGYRLASMTISDVGSRANALVELSDPEGNRVAETAQGNGPVDALFGALASATGVKLELDSYQVHSVGIGADARGEASLSVRHDGVEYEGTGTSKDIIEASALAWLDVANRLLRQRERGVIAGKTAAVA.

The region spanning 12 to 274 is the Pyruvate carboxyltransferase domain; that stretch reads IRIFDTTLRD…DSAINTPRIV (263 aa). Mn(2+) contacts are provided by D21, H209, H211, and N245. Positions 396–520 are regulatory domain; that stretch reads RLASMTISDV…VIAGKTAAVA (125 aa).

Belongs to the alpha-IPM synthase/homocitrate synthase family. LeuA type 1 subfamily. Homodimer. Requires Mn(2+) as cofactor.

Its subcellular location is the cytoplasm. The enzyme catalyses 3-methyl-2-oxobutanoate + acetyl-CoA + H2O = (2S)-2-isopropylmalate + CoA + H(+). The protein operates within amino-acid biosynthesis; L-leucine biosynthesis; L-leucine from 3-methyl-2-oxobutanoate: step 1/4. In terms of biological role, catalyzes the condensation of the acetyl group of acetyl-CoA with 3-methyl-2-oxobutanoate (2-ketoisovalerate) to form 3-carboxy-3-hydroxy-4-methylpentanoate (2-isopropylmalate). This Xanthomonas oryzae pv. oryzae (strain MAFF 311018) protein is 2-isopropylmalate synthase.